The following is a 428-amino-acid chain: Glutamate-1-semialdehyde 2,1-aminomutase (428 aa).

An N6-(pyridoxal phosphate)lysine modification is found at K265.

This sequence belongs to the class-III pyridoxal-phosphate-dependent aminotransferase family. HemL subfamily. As to quaternary structure, homodimer. Requires pyridoxal 5'-phosphate as cofactor.

It localises to the cytoplasm. The enzyme catalyses (S)-4-amino-5-oxopentanoate = 5-aminolevulinate. Its pathway is porphyrin-containing compound metabolism; protoporphyrin-IX biosynthesis; 5-aminolevulinate from L-glutamyl-tRNA(Glu): step 2/2. The polypeptide is Glutamate-1-semialdehyde 2,1-aminomutase (Shewanella loihica (strain ATCC BAA-1088 / PV-4)).